Consider the following 312-residue polypeptide: Coiled-coil domain-containing protein 160 homolog (312 aa).

Residues serine 126–serine 281 adopt a coiled-coil conformation.

The protein belongs to the CCDC160 family.

The chain is Coiled-coil domain-containing protein 160 homolog from Xenopus tropicalis (Western clawed frog).